Reading from the N-terminus, the 291-residue chain is Homoserine kinase (291 aa).

Proline 80–threonine 90 serves as a coordination point for ATP.

This sequence belongs to the GHMP kinase family. Homoserine kinase subfamily.

It is found in the cytoplasm. The enzyme catalyses L-homoserine + ATP = O-phospho-L-homoserine + ADP + H(+). Its pathway is amino-acid biosynthesis; L-threonine biosynthesis; L-threonine from L-aspartate: step 4/5. Functionally, catalyzes the ATP-dependent phosphorylation of L-homoserine to L-homoserine phosphate. This chain is Homoserine kinase, found in Lactiplantibacillus plantarum (strain ATCC BAA-793 / NCIMB 8826 / WCFS1) (Lactobacillus plantarum).